Reading from the N-terminus, the 471-residue chain is 6-phosphofructo-2-kinase/fructose-2,6-bisphosphatase 1 (471 aa).

Ser2 bears the N-acetylserine mark. The interval 2–250 (SPEMGELTQT…VYYLMNIHVT (249 aa)) is 6-phosphofructo-2-kinase. Ser33 bears the Phosphoserine; by PKA mark. Residue 49–57 (GLPARGKTY) coordinates ATP. Positions 82 and 105 each coordinate beta-D-fructose 6-phosphate. Asp131 is an active-site residue. Residues Thr133 and Arg139 each coordinate beta-D-fructose 6-phosphate. Ser141 is subject to Phosphoserine. Cys161 is a catalytic residue. 170-175 (NIRQVK) contributes to the ATP binding site. Beta-D-fructose 6-phosphate-binding residues include Lys175, Arg196, and Tyr200. Residues 251–471 (PRSIYLCRHG…EALDTVPAHY (221 aa)) form a fructose-2,6-bisphosphatase region. Arg258 is a beta-D-fructose 2,6-bisphosphate binding site. The active-site Tele-phosphohistidine intermediate is the His259. Asn265, Gly271, and Arg308 together coordinate beta-D-fructose 2,6-bisphosphate. Residue Glu328 is the Proton donor/acceptor of the active site. Beta-D-fructose 2,6-bisphosphate-binding residues include Tyr339, Arg353, Lys357, Tyr368, Gln394, and Arg398. 350–353 (FALR) is an ATP binding site. Residues 394-398 (QAVMR) and Tyr430 each bind ATP.

The protein in the C-terminal section; belongs to the phosphoglycerate mutase family. As to quaternary structure, homodimer. Liver.

The catalysed reaction is beta-D-fructose 2,6-bisphosphate + H2O = beta-D-fructose 6-phosphate + phosphate. The enzyme catalyses beta-D-fructose 6-phosphate + ATP = beta-D-fructose 2,6-bisphosphate + ADP + H(+). With respect to regulation, phosphorylation at Ser-33 inhibits the kinase and activates the bisphosphatase. Functionally, synthesis and degradation of fructose 2,6-bisphosphate. This Homo sapiens (Human) protein is 6-phosphofructo-2-kinase/fructose-2,6-bisphosphatase 1.